The primary structure comprises 362 residues: MTNKTVLHAKHLASGAKMVDFFGWDMPINYGSQIEEHHAVRTDAGMFDVSHMTIVDVQGADAKAFLRRLVINDVAKLATPGKALYTGMLNEEGGVIDDLIIYFFSDTDYRLVVNSATRVKDLAWMTKQSTGFDITITERPEFGMLAVQGPEAKAKVAKLLTAEQIEAVEGMKPFFGVQVGDLFIATTGYTGEDGYEIIVPNNSAEDFWQKLLDEGVVPCGLGARDTLRLEAGMNLYGLDMDETVSPLAANMAWTISWEPTDRDFIGRDVLTAQKAAGDQPKLVGLVLEAKGVLRSHQVVVTEFGNGEITSGTFSPTLGHSVALARVPRSVKVGDTIEVEMRKKLIKVQVTKPSFVRNGKKVF.

It belongs to the GcvT family. The glycine cleavage system is composed of four proteins: P, T, L and H.

The catalysed reaction is N(6)-[(R)-S(8)-aminomethyldihydrolipoyl]-L-lysyl-[protein] + (6S)-5,6,7,8-tetrahydrofolate = N(6)-[(R)-dihydrolipoyl]-L-lysyl-[protein] + (6R)-5,10-methylene-5,6,7,8-tetrahydrofolate + NH4(+). The glycine cleavage system catalyzes the degradation of glycine. This Colwellia psychrerythraea (strain 34H / ATCC BAA-681) (Vibrio psychroerythus) protein is Aminomethyltransferase.